A 573-amino-acid polypeptide reads, in one-letter code: Oxygen sensor histidine kinase response regulator DosT (573 aa).

GAF domains are found at residues 61–198 (KLDA…GIAV) and 229–366 (DPAM…ALAW). Residue His-147 coordinates heme. The region spanning 380 to 573 (ILTDRDRIAR…TLLRWSAPLR (194 aa)) is the Histidine kinase domain. Residue His-392 is modified to Phosphohistidine; by autocatalysis.

Mg(2+) is required as a cofactor. Requires heme as cofactor.

It is found in the cytoplasm. Its function is as follows. Interacts with the two-component regulatory system DevR/DevS (DosR/DosS) involved in onset of the dormancy response. Required for full induction of the DevR (DosR) regulon; required during early adaptation to anaerobiosis, to start induction of the DevR regulon. May act as a direct hypoxia/oxygen sensor. May be the secondary sensor for CO. Donates a phosphate group to DevR (DosR). The protein is Oxygen sensor histidine kinase response regulator DosT (dosT) of Mycobacterium tuberculosis (strain CDC 1551 / Oshkosh).